We begin with the raw amino-acid sequence, 435 residues long: Citrate synthase (435 aa).

Active-site residues include H311 and D370.

Belongs to the citrate synthase family. As to quaternary structure, homohexamer.

It catalyses the reaction oxaloacetate + acetyl-CoA + H2O = citrate + CoA + H(+). It functions in the pathway carbohydrate metabolism; tricarboxylic acid cycle; isocitrate from oxaloacetate: step 1/2. This is Citrate synthase (gltA) from Rickettsia africae (strain ESF-5).